Here is a 674-residue protein sequence, read N- to C-terminus: DNA ligase (674 aa).

NAD(+)-binding positions include 34 to 38 (DAEYD), 84 to 85 (SL), and glutamate 116. Lysine 118 serves as the catalytic N6-AMP-lysine intermediate. The NAD(+) site is built by arginine 139, glutamate 174, lysine 291, and lysine 315. Zn(2+) contacts are provided by cysteine 409, cysteine 412, cysteine 425, and cysteine 430. The 89-residue stretch at 586–674 (REGEALKGLT…TGKDPRALTA (89 aa)) folds into the BRCT domain.

The protein belongs to the NAD-dependent DNA ligase family. LigA subfamily. It depends on Mg(2+) as a cofactor. The cofactor is Mn(2+).

The catalysed reaction is NAD(+) + (deoxyribonucleotide)n-3'-hydroxyl + 5'-phospho-(deoxyribonucleotide)m = (deoxyribonucleotide)n+m + AMP + beta-nicotinamide D-nucleotide.. Functionally, DNA ligase that catalyzes the formation of phosphodiester linkages between 5'-phosphoryl and 3'-hydroxyl groups in double-stranded DNA using NAD as a coenzyme and as the energy source for the reaction. It is essential for DNA replication and repair of damaged DNA. In Thermus sp. (strain AK16D), this protein is DNA ligase.